Here is a 361-residue protein sequence, read N- to C-terminus: Eukaryotic translation initiation factor 3 subunit F (361 aa).

2 stretches are compositionally biased toward low complexity: residues 1–11 (MATPVVSASGP) and 21–42 (AAPA…AAAV). Residues 1 to 42 (MATPVVSASGPPATPAPAPVAAPASASASVPAPTPAPAAAAV) are disordered. Residue alanine 2 is modified to N-acetylalanine. Position 50 is a phosphoserine; by CDK11; in vitro (serine 50). Residues 55–78 (AAAATTAAPGQTPASAQAPAQTPA) are compositionally biased toward low complexity. The tract at residues 55-86 (AAAATTAAPGQTPASAQAPAQTPAPALPGPAL) is disordered. One can recognise an MPN domain in the interval 96 to 226 (VRLHPVILAS…IKAYVSTLMG (131 aa)). Residue lysine 242 is modified to N6-acetyllysine. Phosphoserine is present on serine 262.

The protein belongs to the eIF-3 subunit F family. As to quaternary structure, component of the eukaryotic translation initiation factor 3 (eIF-3) complex, which is composed of 13 subunits: EIF3A, EIF3B, EIF3C, EIF3D, EIF3E, EIF3F, EIF3G, EIF3H, EIF3I, EIF3J, EIF3K, EIF3L and EIF3M. The eIF-3 complex appears to include 3 stable modules: module A is composed of EIF3A, EIF3B, EIF3G and EIF3I; module B is composed of EIF3F, EIF3H, and EIF3M; and module C is composed of EIF3C, EIF3D, EIF3E, EIF3K and EIF3L. EIF3C of module C binds EIF3B of module A and EIF3H of module B, thereby linking the three modules. EIF3J is a labile subunit that binds to the eIF-3 complex via EIF3B. The eIF-3 complex interacts with RPS6KB1 under conditions of nutrient depletion. Mitogenic stimulation leads to binding and activation of a complex composed of MTOR and RPTOR, leading to phosphorylation and release of RPS6KB1 and binding of EIF4B to eIF-3. Interacts with RNF139; the interaction leads to protein translation inhibitions in a ubiquitination-dependent manner. Interacts with DTX1, the interaction is required for deubiquitinating activity towards NOTCH1. In terms of processing, phosphorylation is enhanced upon serum stimulation. Phosphorylated during apoptosis by caspase-processed CDK11.

It localises to the cytoplasm. The catalysed reaction is Thiol-dependent hydrolysis of ester, thioester, amide, peptide and isopeptide bonds formed by the C-terminal Gly of ubiquitin (a 76-residue protein attached to proteins as an intracellular targeting signal).. Component of the eukaryotic translation initiation factor 3 (eIF-3) complex, which is required for several steps in the initiation of protein synthesis. The eIF-3 complex associates with the 40S ribosome and facilitates the recruitment of eIF-1, eIF-1A, eIF-2:GTP:methionyl-tRNAi and eIF-5 to form the 43S pre-initiation complex (43S PIC). The eIF-3 complex stimulates mRNA recruitment to the 43S PIC and scanning of the mRNA for AUG recognition. The eIF-3 complex is also required for disassembly and recycling of post-termination ribosomal complexes and subsequently prevents premature joining of the 40S and 60S ribosomal subunits prior to initiation. The eIF-3 complex specifically targets and initiates translation of a subset of mRNAs involved in cell proliferation, including cell cycling, differentiation and apoptosis, and uses different modes of RNA stem-loop binding to exert either translational activation or repression. Its function is as follows. Deubiquitinates activated NOTCH1, promoting its nuclear import, thereby acting as a positive regulator of Notch signaling. The sequence is that of Eukaryotic translation initiation factor 3 subunit F from Macaca fascicularis (Crab-eating macaque).